A 404-amino-acid polypeptide reads, in one-letter code: tRNA (carboxymethyluridine(34)-5-O)-methyltransferase (404 aa).

Phosphoserine is present on Ser-238.

In terms of assembly, interacts with TRM112A and TRM112B.

The catalysed reaction is 5-(carboxymethyl)uridine(34) in tRNA + S-adenosyl-L-methionine = 5-(2-methoxy-2-oxoethyl)uridine(34) in tRNA + S-adenosyl-L-homocysteine. Functionally, catalyzes the methylation of 5-carboxymethyl uridine to 5-methylcarboxymethyl uridine at the wobble position of the anticodon loop in tRNA via its methyltransferase domain. Catalyzes the last step in the formation of 5-methylcarboxymethyl uridine at the wobble position of the anticodon loop in target tRNA. This Arabidopsis thaliana (Mouse-ear cress) protein is tRNA (carboxymethyluridine(34)-5-O)-methyltransferase.